A 513-amino-acid polypeptide reads, in one-letter code: Pantetheinase (513 aa).

Positions 1 to 22 are cleaved as a signal peptide; sequence MITSPLLAYVAILFFCVLKASS. Residues 40-307 form the CN hydrolase domain; the sequence is APLTPVSHEE…GKLLLSQLDS (268 aa). E80 acts as the Proton acceptor in catalysis. N-linked (GlcNAc...) asparagine glycosylation occurs at N147. K179 serves as the catalytic Proton donor. The active-site Nucleophile is C212. N-linked (GlcNAc...) asparagine glycosylation is found at N315 and N353. G487 is lipidated: GPI-anchor amidated glycine. A propeptide spans 488 to 513 (removed in mature form); it reads ASADLVAQGLRVMLGVIITIMYSLSW.

This sequence belongs to the carbon-nitrogen hydrolase superfamily. BTD/VNN family. As to quaternary structure, monomer. As to expression, detected in kidney (at protein level).

It is found in the cell membrane. It carries out the reaction (R)-pantetheine + H2O = cysteamine + (R)-pantothenate. Amidohydrolase that hydrolyzes specifically one of the carboamide linkages in D-pantetheine thus recycling pantothenic acid (vitamin B5) and releasing cysteamine. The sequence is that of Pantetheinase (VNN1) from Sus scrofa (Pig).